The following is an 819-amino-acid chain: MAACALFNGVGGGNTTPDETNNNSTSNSSNISTEDFHNMPQQQPHHSERKLLRKRMASEMELQLHNNNNNNDYHRFSRRTNNTSSLNCSLPATTQKGVTTTTTTTLASSGNNNNNNNNNNNYHYHNNNNNSIINNNNNNVALSRDNVAIQNFPTVTVTTNYSTMLLPSSCSSNLNNSSTSAANYTHYQQPLVEEQNTLPEICGFSGLPLFPSQNNQTNRTNNNSSNNRNNTNTVVDVVSSSPSMEETSATTNWIDGILKDLIHTSNSVSIPQLINNVREIIYPCNPNLALVLEHRLRLLTEPNTCVPERKRNSTEQSGVNVNGNVLAASNVNNSSVKLMNRVDDVVPTSLHFSDSSTLLNQNQNQNMFPNWGATQINNNNNPSVSLVTLPSQPLSTQQDQQHQLQQHPEDLAPATTTTTTSAELALARKKKEEIKEQKKKDEEGLHLLTLLLQCAEAVSAENLEQANKMLLEISQLSTPFGTSAQRVAAYFSEAISARLVSSCLGIYATLPVSSHTPHNQKVASAFQVFNGISPFVKFSHFTANQAIQEAFEREERVHIIDLDIMQGLQWPGLFHILASRPGGPPYVRLTGLGTSMETLEATGKRLSDFANKLGLPFEFFPVAEKVGNIDVEKLNVSKSEAVAVHWLQHSLYDVTGSDTNTLWLLQRLAPKVVTVVEQDLSNAGSFLGRFVEAIHYYSALFDSLGSSYGEESEERHVVEQQLLSREIRNVLAVGGPSRSGEIKFHNWREKLQQCGFRGVSLAGNAATQASLLLGMFPSEGYTLVEDNGILKLGWKDLCLLTASAWRPPYHTNTIIPHHN.

Disordered stretches follow at residues 6 to 49, 65 to 136, 212 to 231, and 393 to 420; these read LFNG…HSER, HNNN…INNN, SQNN…RNNT, and PLST…TTTT. Positions 15–33 are enriched in low complexity; that stretch reads TTPDETNNNSTSNSSNIST. The span at 79 to 98 shows a compositional bias: polar residues; sequence RTNNTSSLNCSLPATTQKGV. Over residues 99–136 the composition is skewed to low complexity; it reads TTTTTTTLASSGNNNNNNNNNNNYHYHNNNNNSIINNN. Residues 418–448 adopt a coiled-coil conformation; sequence TTTSAELALARKKKEEIKEQKKKDEEGLHLL. A GRAS domain is found at 438-806; that stretch reads KKKDEEGLHL…LCLLTASAWR (369 aa). The tract at residues 445–507 is leucine repeat I (LRI); it reads LHLLTLLLQC…RLVSSCLGIY (63 aa). Residues 452–456 carry the LxCxE motif motif; that stretch reads LQCAE. Positions 526 to 591 are VHIID; it reads FQVFNGISPF…GGPPYVRLTG (66 aa). Positions 557-561 match the VHIID motif; the sequence is VHIID. The leucine repeat II (LRII) stretch occupies residues 601-633; that stretch reads ATGKRLSDFANKLGLPFEFFPVAEKVGNIDVEK. Residues 642–729 form a PFYRE region; it reads VAVHWLQHSL…QQLLSREIRN (88 aa). The SAW stretch occupies residues 732–806; sequence AVGGPSRSGE…LCLLTASAWR (75 aa).

This sequence belongs to the GRAS family. In terms of tissue distribution, expressed in shoot apical meristem, leaf primordia, between the cortex and the differentiating vessels in lower shoots and in root endodermis.

Its subcellular location is the nucleus. Functionally, putative transcription factor involved in asymmetric cell division. The chain is Protein SCARECROW (SCR) from Pisum sativum (Garden pea).